The following is a 254-amino-acid chain: Glutamate racemase (254 aa).

Residues Asp10–Ser11 and Tyr42–Gly43 contribute to the substrate site. Cys73 serves as the catalytic Proton donor/acceptor. A substrate-binding site is contributed by Asn74–Thr75. Cys183 functions as the Proton donor/acceptor in the catalytic mechanism. Thr184–His185 is a substrate binding site.

This sequence belongs to the aspartate/glutamate racemases family.

It catalyses the reaction L-glutamate = D-glutamate. It participates in cell wall biogenesis; peptidoglycan biosynthesis. Functionally, provides the (R)-glutamate required for cell wall biosynthesis. The sequence is that of Glutamate racemase from Herpetosiphon aurantiacus (strain ATCC 23779 / DSM 785 / 114-95).